We begin with the raw amino-acid sequence, 385 residues long: 1-deoxy-D-xylulose 5-phosphate reductoisomerase (385 aa).

NADPH contacts are provided by Thr-10, Gly-11, Ser-12, Ile-13, Lys-37, and Asn-124. Residue Lys-125 coordinates 1-deoxy-D-xylulose 5-phosphate. Position 126 (Glu-126) interacts with NADPH. Asp-150 contacts Mn(2+). Ser-151, Glu-152, Ser-176, and His-199 together coordinate 1-deoxy-D-xylulose 5-phosphate. Glu-152 lines the Mn(2+) pocket. NADPH is bound at residue Gly-205. 1-deoxy-D-xylulose 5-phosphate is bound by residues Ser-212, Asn-217, Lys-218, and Glu-221. Residue Glu-221 coordinates Mn(2+).

It belongs to the DXR family. The cofactor is Mg(2+). Mn(2+) serves as cofactor.

It catalyses the reaction 2-C-methyl-D-erythritol 4-phosphate + NADP(+) = 1-deoxy-D-xylulose 5-phosphate + NADPH + H(+). Its pathway is isoprenoid biosynthesis; isopentenyl diphosphate biosynthesis via DXP pathway; isopentenyl diphosphate from 1-deoxy-D-xylulose 5-phosphate: step 1/6. In terms of biological role, catalyzes the NADPH-dependent rearrangement and reduction of 1-deoxy-D-xylulose-5-phosphate (DXP) to 2-C-methyl-D-erythritol 4-phosphate (MEP). The polypeptide is 1-deoxy-D-xylulose 5-phosphate reductoisomerase (Clostridium botulinum (strain Loch Maree / Type A3)).